The following is a 388-amino-acid chain: Succinate--CoA ligase [ADP-forming] subunit beta (388 aa).

Residues 9–244 (KEILRQAGVP…LDEEDPAEVE (236 aa)) form the ATP-grasp domain. ATP-binding positions include lysine 46, 53–55 (GRG), glutamate 99, alanine 102, and glutamate 107. Positions 199 and 213 each coordinate Mg(2+). Substrate-binding positions include asparagine 264 and 321 to 323 (GIM).

Belongs to the succinate/malate CoA ligase beta subunit family. As to quaternary structure, heterotetramer of two alpha and two beta subunits. It depends on Mg(2+) as a cofactor.

It carries out the reaction succinate + ATP + CoA = succinyl-CoA + ADP + phosphate. It catalyses the reaction GTP + succinate + CoA = succinyl-CoA + GDP + phosphate. Its pathway is carbohydrate metabolism; tricarboxylic acid cycle; succinate from succinyl-CoA (ligase route): step 1/1. In terms of biological role, succinyl-CoA synthetase functions in the citric acid cycle (TCA), coupling the hydrolysis of succinyl-CoA to the synthesis of either ATP or GTP and thus represents the only step of substrate-level phosphorylation in the TCA. The beta subunit provides nucleotide specificity of the enzyme and binds the substrate succinate, while the binding sites for coenzyme A and phosphate are found in the alpha subunit. This chain is Succinate--CoA ligase [ADP-forming] subunit beta, found in Albidiferax ferrireducens (strain ATCC BAA-621 / DSM 15236 / T118) (Rhodoferax ferrireducens).